The chain runs to 91 residues: Small ribosomal subunit protein uS19 (91 aa).

It belongs to the universal ribosomal protein uS19 family.

Protein S19 forms a complex with S13 that binds strongly to the 16S ribosomal RNA. This chain is Small ribosomal subunit protein uS19, found in Cupriavidus necator (strain ATCC 17699 / DSM 428 / KCTC 22496 / NCIMB 10442 / H16 / Stanier 337) (Ralstonia eutropha).